The sequence spans 233 residues: 5'-methylthioadenosine/S-adenosylhomocysteine nucleosidase (233 aa).

The active-site Proton acceptor is Glu-12. Substrate-binding positions include Gly-78, Ile-156, and 177–178; that span reads ME. The active-site Proton donor is Asp-201.

It belongs to the PNP/UDP phosphorylase family. MtnN subfamily.

The enzyme catalyses S-adenosyl-L-homocysteine + H2O = S-(5-deoxy-D-ribos-5-yl)-L-homocysteine + adenine. It carries out the reaction S-methyl-5'-thioadenosine + H2O = 5-(methylsulfanyl)-D-ribose + adenine. The catalysed reaction is 5'-deoxyadenosine + H2O = 5-deoxy-D-ribose + adenine. Its pathway is amino-acid biosynthesis; L-methionine biosynthesis via salvage pathway; S-methyl-5-thio-alpha-D-ribose 1-phosphate from S-methyl-5'-thioadenosine (hydrolase route): step 1/2. Functionally, catalyzes the irreversible cleavage of the glycosidic bond in both 5'-methylthioadenosine (MTA) and S-adenosylhomocysteine (SAH/AdoHcy) to adenine and the corresponding thioribose, 5'-methylthioribose and S-ribosylhomocysteine, respectively. Also cleaves 5'-deoxyadenosine, a toxic by-product of radical S-adenosylmethionine (SAM) enzymes, into 5-deoxyribose and adenine. This chain is 5'-methylthioadenosine/S-adenosylhomocysteine nucleosidase, found in Listeria welshimeri serovar 6b (strain ATCC 35897 / DSM 20650 / CCUG 15529 / CIP 8149 / NCTC 11857 / SLCC 5334 / V8).